The following is an 841-amino-acid chain: Protein translocase subunit SecA (841 aa).

Residues 79–80 (MF), Gln-85, 103–107 (GEGKT), and Asp-492 each bind ATP. The disordered stretch occupies residues 786 to 813 (REEVVQGQTTAHQPQEGDDNKKAKKAPV). Zn(2+)-binding residues include Cys-825, Cys-827, Cys-836, and Cys-837.

The protein belongs to the SecA family. In terms of assembly, part of the essential Sec protein translocation apparatus which comprises SecA, SecYEG and auxiliary proteins SecDF. Other proteins may be involved. Monomer and many different homodimers can be isolated, some of which are not formed in the presence of a synthetic signal peptide. A single SecA monomer interacts with SecY in the channel. Only shows some colocalization with FloA or FloT membrane assemblies. The cofactor is Zn(2+).

It localises to the cell membrane. The protein resides in the cytoplasm. It is found in the membrane raft. It catalyses the reaction ATP + H2O + cellular proteinSide 1 = ADP + phosphate + cellular proteinSide 2.. Part of the Sec protein translocase complex. Interacts with the SecYEG preprotein conducting channel. Has a central role in coupling the hydrolysis of ATP to the transfer of proteins into and across the cell membrane, serving as an ATP-driven molecular motor driving the stepwise translocation of polypeptide chains across the membrane. This Bacillus subtilis (strain 168) protein is Protein translocase subunit SecA.